We begin with the raw amino-acid sequence, 433 residues long: Dihydrolipoyllysine-residue acetyltransferase component of pyruvate dehydrogenase complex (433 aa).

Residues 2–77 (AFEFRLPDIG…VVGDVIVKID (76 aa)) form the Lipoyl-binding domain. Lys-43 is modified (N6-lipoyllysine). 2 disordered regions span residues 80 to 134 (DAEE…PSVR) and 164 to 204 (YLNG…FPET). 2 stretches are compositionally biased toward basic and acidic residues: residues 84 to 103 (MQFKGHGDDEDSKKEEKEQE) and 117 to 126 (EKTEVDESKT). The Peripheral subunit-binding (PSBD) domain maps to 128-165 (KAMPSVRKYARENGVNIKAVNGSGKNGRITKEDIDAYL). Positions 166–188 (NGGSSEEGSNTSVASESTSSDVV) are enriched in low complexity. Residue His-404 is part of the active site.

Belongs to the 2-oxoacid dehydrogenase family. As to quaternary structure, forms a 24-polypeptide structural core with octahedral symmetry. The cofactor is (R)-lipoate.

It catalyses the reaction N(6)-[(R)-dihydrolipoyl]-L-lysyl-[protein] + acetyl-CoA = N(6)-[(R)-S(8)-acetyldihydrolipoyl]-L-lysyl-[protein] + CoA. In terms of biological role, the pyruvate dehydrogenase complex catalyzes the overall conversion of pyruvate to acetyl-CoA and CO(2). It contains multiple copies of three enzymatic components: pyruvate dehydrogenase (E1), dihydrolipoamide acetyltransferase (E2) and lipoamide dehydrogenase (E3). The protein is Dihydrolipoyllysine-residue acetyltransferase component of pyruvate dehydrogenase complex (pdhC) of Staphylococcus epidermidis (strain ATCC 12228 / FDA PCI 1200).